The sequence spans 301 residues: Haloalkane dehalogenase (301 aa).

Positions 47 to 284 (PPIVLLHGEP…INASHFIQED (238 aa)) constitute an AB hydrolase-1 domain. Catalysis depends on Asp123, which acts as the Nucleophile. Asp250 serves as the catalytic Proton donor. The active-site Proton acceptor is His279.

The protein belongs to the haloalkane dehalogenase family. Type 1 subfamily. Monomer.

It catalyses the reaction 1-haloalkane + H2O = a halide anion + a primary alcohol + H(+). Catalyzes hydrolytic cleavage of carbon-halogen bonds in halogenated aliphatic compounds, leading to the formation of the corresponding primary alcohols, halide ions and protons. The protein is Haloalkane dehalogenase of Mycolicibacterium paratuberculosis (strain ATCC BAA-968 / K-10) (Mycobacterium paratuberculosis).